The sequence spans 291 residues: Acetylglutamate kinase (291 aa).

Residues 64 to 65 (GG), R86, and N190 each bind substrate.

This sequence belongs to the acetylglutamate kinase family. ArgB subfamily.

Its subcellular location is the cytoplasm. The enzyme catalyses N-acetyl-L-glutamate + ATP = N-acetyl-L-glutamyl 5-phosphate + ADP. It participates in amino-acid biosynthesis; L-arginine biosynthesis; N(2)-acetyl-L-ornithine from L-glutamate: step 2/4. In terms of biological role, catalyzes the ATP-dependent phosphorylation of N-acetyl-L-glutamate. In Leptospira borgpetersenii serovar Hardjo-bovis (strain JB197), this protein is Acetylglutamate kinase.